The primary structure comprises 226 residues: Cytidylate kinase (226 aa).

12 to 20 (GPSGAGKGT) is an ATP binding site.

Belongs to the cytidylate kinase family. Type 1 subfamily.

Its subcellular location is the cytoplasm. It catalyses the reaction CMP + ATP = CDP + ADP. The catalysed reaction is dCMP + ATP = dCDP + ADP. The protein is Cytidylate kinase of Colwellia psychrerythraea (strain 34H / ATCC BAA-681) (Vibrio psychroerythus).